Here is a 645-residue protein sequence, read N- to C-terminus: uncharacterized protein (645 aa).

Belongs to the mycobacterial PPE family.

This is an uncharacterized protein from Mycobacterium tuberculosis (strain CDC 1551 / Oshkosh).